A 369-amino-acid chain; its full sequence is Somatostatin receptor type 2 (369 aa).

Over 1-43 (MEMSSEQLNGSQVWVSSPFDLNGSLGPSNGSNQTEPYYDMTSN) the chain is Extracellular. N9, N22, N29, and N32 each carry an N-linked (GlcNAc...) asparagine glycan. The helical transmembrane segment at 44–67 (AVLTFIYFVVCVVGLCGNTLVIYV) threads the bilayer. Topologically, residues 68 to 78 (ILRYAKMKTIT) are cytoplasmic. Residues 79-103 (NIYILNLAIADELFMLGLPFLAMQV) traverse the membrane as a helical segment. Residues 104–118 (ALVHWPFGKAICRVV) lie on the Extracellular side of the membrane. An intrachain disulfide couples C115 to C193. A helical transmembrane segment spans residues 119–138 (MTVDGINQFTSIFCLTVMSI). Over 139–161 (DRYLAVVHPIKSAKWRRPRTAKM) the chain is Cytoplasmic. A helical membrane pass occupies residues 162–181 (INVAVWCVSLLVILPIMIYA). Over 182 to 207 (GLRSNQWGRSSCTINWPGESGAWYTG) the chain is Extracellular. The chain crosses the membrane as a helical span at residues 208-229 (FIIYAFILGFLVPLTIICLCYL). The Cytoplasmic segment spans residues 230 to 253 (FIIIKVKSSGIRVGSSKRKKSEKK). A helical membrane pass occupies residues 254–278 (VTRMVSIVVAVFIFCWLPFYIFNVS). Residues 279 to 288 (SVSVAISPTP) are Extracellular-facing. Residues 289–303 (ALKGMFDFVVILTYA) traverse the membrane as a helical segment. Residues 304–369 (NSCANPILYA…LLNGDLQTSI (66 aa)) lie on the Cytoplasmic side of the membrane. C328 carries the S-palmitoyl cysteine lipid modification. Residues S341, S343, and S348 each carry the phosphoserine modification. Residues T353 and T354 each carry the phosphothreonine modification.

This sequence belongs to the G-protein coupled receptor 1 family. As to quaternary structure, homodimer and heterodimer with SSTR3 and SSTR5. Heterodimerization with SSTR3 inactivates SSTR3 receptor function. Heterodimerization with SSTR5 is enhanced by agonist stimulation of SSTR2 and increases SSTR2 cell growth inhibition activity. Following agonist stimulation, homodimers dissociate into monomers which is required for receptor internalization. Interacts with beta-arrestin; this interaction is necessary for receptor internalization and is destabilized by heterodimerization with SSTR5 which results in increased recycling of SSTR2 to the cell surface. Interacts (via C-terminus) with SHANK1 (via PDZ domain). Phosphorylated on serine and threonine residues in response to agonist stimulation, leading to receptor desensitization and rapid internalization. Phosphorylated to a greater extent on serine than threonine residues. Threonine phosphorylation is required for arrestin binding and receptor endocytosis but is not necessary for desensitization. Cerebrum and kidney.

Its subcellular location is the cell membrane. It localises to the cytoplasm. Functionally, receptor for somatostatin-14 and -28. This receptor is coupled via pertussis toxin sensitive G proteins to inhibition of adenylyl cyclase. In addition it stimulates phosphotyrosine phosphatase and PLC via pertussis toxin insensitive as well as sensitive G proteins. Inhibits calcium entry by suppressing voltage-dependent calcium channels. Acts as the functionally dominant somatostatin receptor in pancreatic alpha- and beta-cells where it mediates the inhibitory effect of somatostatin-14 on hormone secretion. Inhibits cell growth through enhancement of MAPK1 and MAPK2 phosphorylation and subsequent up-regulation of CDKN1B. Stimulates neuronal migration and axon outgrowth and may participate in neuron development and maturation during brain development. Mediates negative regulation of insulin receptor signaling through PTPN6. Inactivates SSTR3 receptor function following heterodimerization. This chain is Somatostatin receptor type 2 (Sstr2), found in Mus musculus (Mouse).